Here is a 234-residue protein sequence, read N- to C-terminus: DNA repair protein RecO (234 aa).

Belongs to the RecO family.

In terms of biological role, involved in DNA repair and RecF pathway recombination. This chain is DNA repair protein RecO, found in Hamiltonella defensa subsp. Acyrthosiphon pisum (strain 5AT).